The chain runs to 233 residues: DNA-directed RNA polymerase I subunit RPA34 (233 aa).

4 positions are modified to phosphoserine: serine 10, serine 12, serine 14, and serine 60. Over residues 179–191 the composition is skewed to basic and acidic residues; it reads DFHVAEEVKENKK. The interval 179 to 233 is disordered; sequence DFHVAEEVKENKKEPKKRSHHDDEEESSEKKKKKKEKREKREKKDKKDKKKKHRD. A compositionally biased stretch (basic residues) spans 208 to 233; the sequence is KKKKKKEKREKREKKDKKDKKKKHRD.

The protein belongs to the eukaryotic RPA34 RNA polymerase subunit family. Component of the RNA polymerase I (Pol I) complex consisting of 14 subunits: RPA135, RPA190, RPC40, RPA14, RPB5, RPO26, RPA43, RPB8, RPA12, RPB10, RPC19, RPC10, RPA49 and RPA34. The complex is composed of a horseshoe-shaped core containing ten subunits (RPA135, RPA190, RPB5, RPO26, RPB8, RPB10, RPC10, RPA12, RPC19 and RPC40) where RPA135 and RPA190 form the DNA-binding cleft. Outside of the core, RPA14 and RPA43 form the stalk that mediates interactions with transcription initiation factors and newly synthesized RNA. Forms a TFIIF-like heterodimer with RPA49; the heterodimer formed by RPA34 and RPA49 can be dissociated from the Pol I core giving rise to a 12 subunit form A* of Pol I (formerly called pol A) that shows impaired transcript elongation activity and increased sensitivity to alpha-amanitin. The heterodimer formed by RPA34 and RPA49 stabilizes subunit RPA12 and stimulates RPA12-dependent RNA cleavage.

Its subcellular location is the nucleus. The protein resides in the nucleolus. DNA-dependent RNA polymerases catalyze the transcription of DNA into RNA using the four ribonucleoside triphosphates as substrates. Component of RNA polymerase I (Pol I) which synthesizes ribosomal RNA precursors. Besides, RNA polymerase I has intrinsic RNA cleavage activity. The heterodimer formed by RPA34 and RPA49 stimulates transcript elongation by Pol I. The chain is DNA-directed RNA polymerase I subunit RPA34 (RPA34) from Saccharomyces cerevisiae (strain ATCC 204508 / S288c) (Baker's yeast).